A 62-amino-acid polypeptide reads, in one-letter code: Lepidopteran-selective toxin (62 aa).

A signal peptide spans 1–24 (MKFLYGVILIALFLTVMTATLSEA). 4 disulfide bridges follow: cysteine 26-cysteine 43, cysteine 29-cysteine 51, cysteine 40-cysteine 56, and cysteine 44-cysteine 58. A propeptide is located at residue tyrosine 62.

Belongs to the short scorpion toxin superfamily. Chloride channel inhibitor family. Expressed by the venom gland.

It localises to the secreted. Its function is as follows. Toxin with unknown function in healthy organisms. On glioma cells, interacts with chloride channels (probably ClC-3/CLCN3) and MMP2 at the surface of glioma cells. This complex is then internalized via caveolae, thus inhibiting the chloride channels necessary for cell shrinkage and tumor propagation. Induces flaccid paralysis in H.virescens larvae. Is not toxic to S.falculata larvae or mice. The chain is Lepidopteran-selective toxin from Hottentotta tamulus (Eastern Indian scorpion).